The chain runs to 94 residues: PTS system galactitol-specific EIIB component (94 aa).

One can recognise a PTS EIIB type-2 domain in the interval 1-94; that stretch reads MKRKIIVACG…QNKILTILQG (94 aa). Cys-9 acts as the Phosphocysteine intermediate; for EIIB activity in catalysis. Cys-9 is subject to Phosphocysteine; by EIIA.

As to quaternary structure, forms a complex with one each of subunit of GatA, GatB and 2 subunits of GatC.

It localises to the cytoplasm. The catalysed reaction is galactitol(out) + N(pros)-phospho-L-histidyl-[protein] = galactitol 1-phosphate(in) + L-histidyl-[protein]. The phosphoenolpyruvate-dependent sugar phosphotransferase system (PTS), a major carbohydrate active transport system, catalyzes the phosphorylation of incoming sugar substrates concomitant with their translocation across the cell membrane. The enzyme II complex composed of GatA, GatB and GatC is involved in galactitol transport. This is PTS system galactitol-specific EIIB component (gatB) from Escherichia coli O157:H7.